Consider the following 226-residue polypeptide: Cytidylate kinase (226 aa).

10 to 18 (GPASSGKST) is an ATP binding site.

It belongs to the cytidylate kinase family. Type 1 subfamily.

The protein resides in the cytoplasm. The enzyme catalyses CMP + ATP = CDP + ADP. The catalysed reaction is dCMP + ATP = dCDP + ADP. In Streptococcus thermophilus (strain ATCC BAA-491 / LMD-9), this protein is Cytidylate kinase.